Here is a 139-residue protein sequence, read N- to C-terminus: ATP synthase epsilon chain (139 aa).

This sequence belongs to the ATPase epsilon chain family. As to quaternary structure, F-type ATPases have 2 components, CF(1) - the catalytic core - and CF(0) - the membrane proton channel. CF(1) has five subunits: alpha(3), beta(3), gamma(1), delta(1), epsilon(1). CF(0) has three main subunits: a, b and c.

Its subcellular location is the cell inner membrane. In terms of biological role, produces ATP from ADP in the presence of a proton gradient across the membrane. The sequence is that of ATP synthase epsilon chain from Actinobacillus pleuropneumoniae serotype 7 (strain AP76).